The primary structure comprises 1728 residues: Mitochondrial 3' processome subunit 1 (1728 aa).

A mitochondrion-targeting transit peptide spans Met1–Phe117. 3 disordered regions span residues His45–Gly71, Glu88–Gln156, and Gly829–Thr863.

Component of the mitochondrial 3' processome (MPsome) complex composed at least of terminal uridylyltransferase KRET1/TUT1, 3'-5' exonuclease DSS1, MPSS1, MPSS2 and MPSS3. Within the complex, interacts with KRET1.

It is found in the mitochondrion. Functionally, as part of the mitochondrial 3' processome (MPsome), involved in the maturation of guided RNA (gRNA) precursors. This is Mitochondrial 3' processome subunit 1 from Trypanosoma brucei brucei.